Reading from the N-terminus, the 199-residue chain is Cytochrome c oxidase subunit 2 (199 aa).

The chain crosses the membrane as a helical span at residues 1 to 13; that stretch reads AICSLVLYLLTLM. Residues 14 to 26 lie on the Mitochondrial matrix side of the membrane; it reads LMEKLSSNSVDAQ. Residues 27-54 traverse the membrane as a helical segment; it reads EVELVWTILPAIVLILLALPSLQILYMM. The Mitochondrial intermembrane portion of the chain corresponds to 55–199; sequence DEIDEPDLTL…SSLLSTSSSL (145 aa). Positions 128, 163, 165, 167, 171, and 174 each coordinate Cu cation. Glu165 is a Mg(2+) binding site.

This sequence belongs to the cytochrome c oxidase subunit 2 family. Component of the cytochrome c oxidase (complex IV, CIV), a multisubunit enzyme composed of 14 subunits. The complex is composed of a catalytic core of 3 subunits MT-CO1, MT-CO2 and MT-CO3, encoded in the mitochondrial DNA, and 11 supernumerary subunits COX4I, COX5A, COX5B, COX6A, COX6B, COX6C, COX7A, COX7B, COX7C, COX8 and NDUFA4, which are encoded in the nuclear genome. The complex exists as a monomer or a dimer and forms supercomplexes (SCs) in the inner mitochondrial membrane with NADH-ubiquinone oxidoreductase (complex I, CI) and ubiquinol-cytochrome c oxidoreductase (cytochrome b-c1 complex, complex III, CIII), resulting in different assemblies (supercomplex SCI(1)III(2)IV(1) and megacomplex MCI(2)III(2)IV(2)). Found in a complex with TMEM177, COA6, COX18, COX20, SCO1 and SCO2. Interacts with TMEM177 in a COX20-dependent manner. Interacts with COX20. Interacts with COX16. It depends on Cu cation as a cofactor.

It is found in the mitochondrion inner membrane. It carries out the reaction 4 Fe(II)-[cytochrome c] + O2 + 8 H(+)(in) = 4 Fe(III)-[cytochrome c] + 2 H2O + 4 H(+)(out). In terms of biological role, component of the cytochrome c oxidase, the last enzyme in the mitochondrial electron transport chain which drives oxidative phosphorylation. The respiratory chain contains 3 multisubunit complexes succinate dehydrogenase (complex II, CII), ubiquinol-cytochrome c oxidoreductase (cytochrome b-c1 complex, complex III, CIII) and cytochrome c oxidase (complex IV, CIV), that cooperate to transfer electrons derived from NADH and succinate to molecular oxygen, creating an electrochemical gradient over the inner membrane that drives transmembrane transport and the ATP synthase. Cytochrome c oxidase is the component of the respiratory chain that catalyzes the reduction of oxygen to water. Electrons originating from reduced cytochrome c in the intermembrane space (IMS) are transferred via the dinuclear copper A center (CU(A)) of subunit 2 and heme A of subunit 1 to the active site in subunit 1, a binuclear center (BNC) formed by heme A3 and copper B (CU(B)). The BNC reduces molecular oxygen to 2 water molecules using 4 electrons from cytochrome c in the IMS and 4 protons from the mitochondrial matrix. This Apteryx australis (Southern brown kiwi) protein is Cytochrome c oxidase subunit 2 (MT-CO2).